The sequence spans 227 residues: Interleukin-6 (227 aa).

A signal peptide spans 1–22 (MASISYLLAPLVLAAVLQPTAG). The tract at residues 24-45 (PLDAPTESPAGETSGEEAETGS) is disordered. Cysteines 93 and 103 form a disulfide.

Belongs to the IL-6 superfamily. In terms of assembly, component of a hexamer of two molecules each of IL6, IL6R and IL6ST; first binds to IL6R to associate with the signaling subunit IL6ST. In terms of tissue distribution, after induction, highly expressed in spleen. Can also be expressed in kidney after incubation with PHA.

It is found in the secreted. Cytokine with a wide variety of biological functions in immunity, tissue regeneration, and metabolism. Binds to IL6R, then the complex associates to the signaling subunit IL6ST/gp130 to trigger the intracellular IL6-signaling pathway. The interaction with the membrane-bound IL6R and IL6ST stimulates 'classic signaling', whereas the binding of IL6 and soluble IL6R to IL6ST stimulates 'trans-signaling'. Alternatively, 'cluster signaling' occurs when membrane-bound IL6:IL6R complexes on transmitter cells activate IL6ST receptors on neighboring receiver cells. This chain is Interleukin-6 (il6), found in Takifugu rubripes (Japanese pufferfish).